Consider the following 513-residue polypeptide: ATP synthase subunit alpha (513 aa).

An ATP-binding site is contributed by 169-176 (GDRQTGKT).

Belongs to the ATPase alpha/beta chains family. F-type ATPases have 2 components, CF(1) - the catalytic core - and CF(0) - the membrane proton channel. CF(1) has five subunits: alpha(3), beta(3), gamma(1), delta(1), epsilon(1). CF(0) has three main subunits: a(1), b(2) and c(9-12). The alpha and beta chains form an alternating ring which encloses part of the gamma chain. CF(1) is attached to CF(0) by a central stalk formed by the gamma and epsilon chains, while a peripheral stalk is formed by the delta and b chains.

The protein localises to the cell inner membrane. It carries out the reaction ATP + H2O + 4 H(+)(in) = ADP + phosphate + 5 H(+)(out). In terms of biological role, produces ATP from ADP in the presence of a proton gradient across the membrane. The alpha chain is a regulatory subunit. In Bordetella bronchiseptica (strain ATCC BAA-588 / NCTC 13252 / RB50) (Alcaligenes bronchisepticus), this protein is ATP synthase subunit alpha.